The primary structure comprises 61 residues: UPF0434 protein PFL_1779 (61 aa).

This sequence belongs to the UPF0434 family.

This chain is UPF0434 protein PFL_1779, found in Pseudomonas fluorescens (strain ATCC BAA-477 / NRRL B-23932 / Pf-5).